The primary structure comprises 198 residues: Recombination protein RecR (198 aa).

A C4-type zinc finger spans residues 57 to 72 (CDKCNTFTEAQICEVC). A Toprim domain is found at 80 to 175 (TLLCVVETPA…AVTRLARGVP (96 aa)).

It belongs to the RecR family.

May play a role in DNA repair. It seems to be involved in an RecBC-independent recombinational process of DNA repair. It may act with RecF and RecO. The sequence is that of Recombination protein RecR from Burkholderia multivorans (strain ATCC 17616 / 249).